We begin with the raw amino-acid sequence, 151 residues long: Putative pre-16S rRNA nuclease (151 aa).

The protein belongs to the YqgF nuclease family.

The protein resides in the cytoplasm. Its function is as follows. Could be a nuclease involved in processing of the 5'-end of pre-16S rRNA. The polypeptide is Putative pre-16S rRNA nuclease (Neisseria gonorrhoeae (strain ATCC 700825 / FA 1090)).